The chain runs to 217 residues: Uracil-DNA glycosylase (217 aa).

D62 (proton acceptor) is an active-site residue.

This sequence belongs to the uracil-DNA glycosylase (UDG) superfamily. UNG family.

It is found in the cytoplasm. It catalyses the reaction Hydrolyzes single-stranded DNA or mismatched double-stranded DNA and polynucleotides, releasing free uracil.. Excises uracil residues from the DNA which can arise as a result of misincorporation of dUMP residues by DNA polymerase or due to deamination of cytosine. In Streptococcus pneumoniae serotype 19F (strain G54), this protein is Uracil-DNA glycosylase.